The sequence spans 137 residues: BolA-like protein 1 (137 aa).

At Ser-81 the chain carries Phosphoserine. Residues 114-137 (WGENSQLDTSPPCLGGNKKTLGTP) form a disordered region.

It belongs to the BolA/IbaG family. Interacts with GLRX5.

It localises to the mitochondrion. Acts as a mitochondrial iron-sulfur (Fe-S) cluster assembly factor that facilitates (Fe-S) cluster insertion into a subset of mitochondrial proteins. Probably acts together with the monothiol glutaredoxin GLRX5. May protect cells against oxidative stress. The polypeptide is BolA-like protein 1 (BOLA1) (Pongo abelii (Sumatran orangutan)).